We begin with the raw amino-acid sequence, 89 residues long: Small ribosomal subunit protein bS20 (89 aa).

It belongs to the bacterial ribosomal protein bS20 family.

Binds directly to 16S ribosomal RNA. The protein is Small ribosomal subunit protein bS20 of Helicobacter acinonychis (strain Sheeba).